A 56-amino-acid chain; its full sequence is Ovomucoid (56 aa).

In terms of domain architecture, Kazal-like spans 6 to 56; the sequence is VDCSEYPKPACTLEYRPLCGSDNKTYANKCNFCNAVVESNGTLTLSHFGKC. Disulfide bonds link Cys-8-Cys-38, Cys-16-Cys-35, and Cys-24-Cys-56. Asn-45 carries N-linked (GlcNAc...) asparagine glycosylation.

It is found in the secreted. This Callipepla californica (California quail) protein is Ovomucoid.